The chain runs to 150 residues: D-aminoacyl-tRNA deacylase (150 aa).

A Gly-cisPro motif, important for rejection of L-amino acids motif is present at residues 138–139; the sequence is GP.

The protein belongs to the DTD family. In terms of assembly, homodimer.

The protein resides in the cytoplasm. It catalyses the reaction glycyl-tRNA(Ala) + H2O = tRNA(Ala) + glycine + H(+). The catalysed reaction is a D-aminoacyl-tRNA + H2O = a tRNA + a D-alpha-amino acid + H(+). Its function is as follows. An aminoacyl-tRNA editing enzyme that deacylates mischarged D-aminoacyl-tRNAs. Also deacylates mischarged glycyl-tRNA(Ala), protecting cells against glycine mischarging by AlaRS. Acts via tRNA-based rather than protein-based catalysis; rejects L-amino acids rather than detecting D-amino acids in the active site. By recycling D-aminoacyl-tRNA to D-amino acids and free tRNA molecules, this enzyme counteracts the toxicity associated with the formation of D-aminoacyl-tRNA entities in vivo and helps enforce protein L-homochirality. The polypeptide is D-aminoacyl-tRNA deacylase (Cytophaga hutchinsonii (strain ATCC 33406 / DSM 1761 / CIP 103989 / NBRC 15051 / NCIMB 9469 / D465)).